The primary structure comprises 175 residues: ATP synthase subunit b (175 aa).

The chain crosses the membrane as a helical span at residues 18 to 38 (VTSWEPFVANLIAFILMVVIL).

It belongs to the ATPase B chain family. In terms of assembly, F-type ATPases have 2 components, F(1) - the catalytic core - and F(0) - the membrane proton channel. F(1) has five subunits: alpha(3), beta(3), gamma(1), delta(1), epsilon(1). F(0) has three main subunits: a(1), b(2) and c(10-14). The alpha and beta chains form an alternating ring which encloses part of the gamma chain. F(1) is attached to F(0) by a central stalk formed by the gamma and epsilon chains, while a peripheral stalk is formed by the delta and b chains.

Its subcellular location is the cell inner membrane. Its function is as follows. F(1)F(0) ATP synthase produces ATP from ADP in the presence of a proton or sodium gradient. F-type ATPases consist of two structural domains, F(1) containing the extramembraneous catalytic core and F(0) containing the membrane proton channel, linked together by a central stalk and a peripheral stalk. During catalysis, ATP synthesis in the catalytic domain of F(1) is coupled via a rotary mechanism of the central stalk subunits to proton translocation. Functionally, component of the F(0) channel, it forms part of the peripheral stalk, linking F(1) to F(0). This is ATP synthase subunit b from Akkermansia muciniphila (strain ATCC BAA-835 / DSM 22959 / JCM 33894 / BCRC 81048 / CCUG 64013 / CIP 107961 / Muc).